We begin with the raw amino-acid sequence, 390 residues long: MRALNNSYDVVVVGAGPAGSMASYNASKNGAKTLLLEKSQEIGTPVRCAEAVPRLEDFGINPDPSFVRSYIKGGYLIAPNGKQVVVKGGKTDGYVVERKVFDKYLAIRSGQAGTQIAVKSRVTGIEKTDDGYNVFVNYLGDEYIVKTKIVIAADGVESNIAEYAGLKSKKSHKEICSCAEYEMTNVKLLDNEMMEFYFGDICPKGYIWLFPKGDTVNVGIGIIDSKKRAIDYLDEFLTNPLVKGRLDNAVPVEFKVGGDPVGGPIEKTVADNIMVVGDAAGHVSPLTGGGIGLSMSCGLMAGDVAAQSIKAEDHSREFLSAYEKRWKEKYYKPLMKDLKYKTILQKLSDEELNAIADSIPENLEEVDVGKLAVKIVAKAPSLLRHFKELI.

Residues Ala18, Glu37, Cys48, Ala49, Ala51, Arg98, Val122, Asp278, Gly290, and Ile291 each contribute to the FAD site. Val368 contacts a 2,3-bis-O-(geranylgeranyl)-sn-glycerol 1-phospholipid.

This sequence belongs to the geranylgeranyl reductase family. DGGGPL reductase subfamily. FAD serves as cofactor.

The catalysed reaction is a 2,3-bis-O-phytanyl-sn-glycerol 1-phospholipid + 8 A = a 2,3-bis-O-(geranylgeranyl)-sn-glycerol 1-phospholipid + 8 AH2. It catalyses the reaction 2,3-bis-O-(phytanyl)-sn-glycerol 1-phosphate + 8 A = 2,3-bis-O-(geranylgeranyl)-sn-glycerol 1-phosphate + 8 AH2. It carries out the reaction CDP-2,3-bis-O-(geranylgeranyl)-sn-glycerol + 8 AH2 = CDP-2,3-bis-O-(phytanyl)-sn-glycerol + 8 A. The enzyme catalyses archaetidylserine + 8 AH2 = 2,3-bis-O-phytanyl-sn-glycero-3-phospho-L-serine + 8 A. The protein operates within membrane lipid metabolism; glycerophospholipid metabolism. Functionally, is involved in the reduction of 2,3-digeranylgeranylglycerophospholipids (unsaturated archaeols) into 2,3-diphytanylglycerophospholipids (saturated archaeols) in the biosynthesis of archaeal membrane lipids. Catalyzes the formation of archaetidic acid (2,3-di-O-phytanyl-sn-glyceryl phosphate) from 2,3-di-O-geranylgeranylglyceryl phosphate (DGGGP) via the hydrogenation of each double bond of the isoprenoid chains. Is also probably able to reduce double bonds of geranyl groups in CDP-2,3-bis-O-(geranylgeranyl)-sn-glycerol and archaetidylserine, thus acting at various stages in the biosynthesis of archaeal membrane lipids. This chain is Digeranylgeranylglycerophospholipid reductase, found in Methanococcus maripaludis (strain C5 / ATCC BAA-1333).